A 242-amino-acid chain; its full sequence is MTITSWLAASRHTVVLTGAGMSTESGLPDFRSPRTGLWARFNPSELATIDALYHRRESFVEFYQYRIRTLQQCQPHDGHRLLADWERRGIVQTIVTQNVDGFHQEAGSRRVIELHGSLRTVHCQRCGESKPSFVYLHGVLTCECGGVLRPSVVLFGEPLPEKAITEAWEAAQQADLFLVLGSSLQVSPANQLPLVAKRNGAKLVIINWEPTELDDLADAVIHQRKIGEVLNELNEQLAEVDP.

The region spanning Met1–Pro242 is the Deacetylase sirtuin-type domain. The NAD(+) site is built by Ala19, Thr23, Phe30, Arg31, Gln97, Val99, Asp100, and His115. Residue Phe30 participates in nicotinamide binding. Val99 and Asp100 together coordinate nicotinamide. Residue His115 is the Proton acceptor of the active site. The Zn(2+) site is built by Cys123, Cys126, Cys142, and Cys144. NAD(+) contacts are provided by Ser182, Ser183, Asn207, and Ile226.

The protein belongs to the sirtuin family. Class U subfamily. It depends on Zn(2+) as a cofactor.

Its subcellular location is the cytoplasm. It catalyses the reaction N(6)-acetyl-L-lysyl-[protein] + NAD(+) + H2O = 2''-O-acetyl-ADP-D-ribose + nicotinamide + L-lysyl-[protein]. Functionally, NAD-dependent protein deacetylase which modulates the activities of several enzymes which are inactive in their acetylated form. The chain is NAD-dependent protein deacetylase 1 from Geobacillus kaustophilus (strain HTA426).